The following is a 330-amino-acid chain: Fructose-1,6-bisphosphatase class 1 (330 aa).

Residues Glu-84, Asp-103, Leu-105, and Asp-106 each contribute to the Mg(2+) site. Substrate contacts are provided by residues 106 to 109 (DGSS), Asn-196, and Lys-262. Glu-268 is a binding site for Mg(2+).

Belongs to the FBPase class 1 family. Homotetramer. The cofactor is Mg(2+).

Its subcellular location is the cytoplasm. It carries out the reaction beta-D-fructose 1,6-bisphosphate + H2O = beta-D-fructose 6-phosphate + phosphate. It functions in the pathway carbohydrate biosynthesis; gluconeogenesis. The protein is Fructose-1,6-bisphosphatase class 1 of Shewanella sp. (strain ANA-3).